The primary structure comprises 610 residues: UvrABC system protein C (610 aa).

Residues 13–91 (HLPGVYRMYD…IKENQPKYNV (79 aa)) form the GIY-YIG domain. The 36-residue stretch at 201-236 (GQVVEHLVQKMENAAQELDFEAAARFRDQIQSVRAV) folds into the UVR domain.

This sequence belongs to the UvrC family. Interacts with UvrB in an incision complex.

It localises to the cytoplasm. In terms of biological role, the UvrABC repair system catalyzes the recognition and processing of DNA lesions. UvrC both incises the 5' and 3' sides of the lesion. The N-terminal half is responsible for the 3' incision and the C-terminal half is responsible for the 5' incision. This Actinobacillus pleuropneumoniae serotype 7 (strain AP76) protein is UvrABC system protein C.